The sequence spans 221 residues: Holliday junction branch migration complex subunit RuvA (221 aa).

The interval 1–61 (MQIYQFGKIV…DYTKITYGFA (61 aa)) is domain I. A domain II region spans residues 62 to 139 (SFRERILFED…RFNENHKNQT (78 aa)). The disordered stretch occupies residues 133 to 155 (ENHKNQTEETNQDSQEKELEKKD). A flexible linker region spans residues 140-166 (EETNQDSQEKELEKKDDLADITIQKSN). Residues 146-155 (SQEKELEKKD) show a composition bias toward basic and acidic residues. The tract at residues 167 to 221 (LEDKTAANLEDTLKMLGFKPRQIDYALTKVEPNENFENLIENAIKIISNAREFRN) is domain III.

Belongs to the RuvA family. In terms of assembly, homotetramer. Forms an RuvA(8)-RuvB(12)-Holliday junction (HJ) complex. HJ DNA is sandwiched between 2 RuvA tetramers; dsDNA enters through RuvA and exits via RuvB. An RuvB hexamer assembles on each DNA strand where it exits the tetramer. Each RuvB hexamer is contacted by two RuvA subunits (via domain III) on 2 adjacent RuvB subunits; this complex drives branch migration. In the full resolvosome a probable DNA-RuvA(4)-RuvB(12)-RuvC(2) complex forms which resolves the HJ.

It localises to the cytoplasm. In terms of biological role, the RuvA-RuvB-RuvC complex processes Holliday junction (HJ) DNA during genetic recombination and DNA repair, while the RuvA-RuvB complex plays an important role in the rescue of blocked DNA replication forks via replication fork reversal (RFR). RuvA specifically binds to HJ cruciform DNA, conferring on it an open structure. The RuvB hexamer acts as an ATP-dependent pump, pulling dsDNA into and through the RuvAB complex. HJ branch migration allows RuvC to scan DNA until it finds its consensus sequence, where it cleaves and resolves the cruciform DNA. The protein is Holliday junction branch migration complex subunit RuvA of Mesomycoplasma hyopneumoniae (strain J / ATCC 25934 / NCTC 10110) (Mycoplasma hyopneumoniae).